A 133-amino-acid polypeptide reads, in one-letter code: Ribosome-binding factor A (133 aa).

The protein belongs to the RbfA family. In terms of assembly, monomer. Binds 30S ribosomal subunits, but not 50S ribosomal subunits or 70S ribosomes.

The protein resides in the cytoplasm. Functionally, one of several proteins that assist in the late maturation steps of the functional core of the 30S ribosomal subunit. Associates with free 30S ribosomal subunits (but not with 30S subunits that are part of 70S ribosomes or polysomes). Required for efficient processing of 16S rRNA. May interact with the 5'-terminal helix region of 16S rRNA. This chain is Ribosome-binding factor A, found in Alteromonas mediterranea (strain DSM 17117 / CIP 110805 / LMG 28347 / Deep ecotype).